The primary structure comprises 64 residues: Large ribosomal subunit protein uL30 (64 aa).

It belongs to the universal ribosomal protein uL30 family. In terms of assembly, part of the 50S ribosomal subunit.

The sequence is that of Large ribosomal subunit protein uL30 from Desulforudis audaxviator (strain MP104C).